A 357-amino-acid polypeptide reads, in one-letter code: Vomeronasal type-1 receptor 5 (357 aa).

Residues 1–3 (MLK) lie on the Extracellular side of the membrane. Residues 4 to 24 (LVIIENMAEIMLFSLDLLLFS) form a helical membrane-spanning segment. Topologically, residues 25-52 (TDILCFNFPSKMIKLPGFITIQIFFYPQ) are cytoplasmic. Residues 53–73 (ASFGISANTILFLFHIFTFVF) form a helical membrane-spanning segment. At 74 to 81 (SHRSKSID) the chain is on the extracellular side. The helical transmembrane segment at 82–102 (MIISHLSLIHILLLFTQAILV) threads the bilayer. Over 103–130 (SLDFFGSQNTQDDLRCKVIVFLNKVMRG) the chain is Cytoplasmic. Residues 131 to 151 (LSICTPCLLNVLQAIISPSIF) form a helical membrane-spanning segment. At 152–163 (SLAKLKHPSASH) the chain is on the extracellular side. A helical membrane pass occupies residues 164 to 184 (ILGFFLFSWVLNMFIGVIFCC). Over 185–269 (TLWLPPVKWG…PVSPVKRASQ (85 aa)) the chain is Cytoplasmic. The chain crosses the membrane as a helical span at residues 270–290 (TILLLVSFVFIYWVDFMFSFS). The Extracellular segment spans residues 291–300 (RGVTWINDSL). Asparagine 297 carries an N-linked (GlcNAc...) asparagine glycan. A helical transmembrane segment spans residues 301–321 (LVWFQVIVANSYATISPLMLI). At 322-357 (YADNQIFKTLQMLWFKYLSPPKLMLKFNRQCGSTKK) the chain is on the cytoplasmic side.

Belongs to the G-protein coupled receptor 1 family.

The protein resides in the cell membrane. Its function is as follows. Putative pheromone receptor. This is Vomeronasal type-1 receptor 5 (VN1R5) from Gorilla gorilla gorilla (Western lowland gorilla).